Reading from the N-terminus, the 385-residue chain is MTSPPSPLDFFWFIPTHGDGSYLGSEEQQRPPEFGYFKQIAQAVDRLGFPGVLLPTGQNCEDSWITATGLATLTEKLKFLVALRPGVTLPTFAARQTAALDRLSNGRLLLNVVVGGNPTELAGDGVFLPHDERYAQAHEFLTIWRGLVSGERVNFDGKYYRVENGRLDLLPSQERPPLYFGGSSDAGQDLAADLVDMYLTWGEPPALVAEKLASARKKAALRGRKLRFGIRLHFIVRETEDEAWRAADRLISHVTDAQIENAQARFLNQMDSVGQRRMAELHGGRRDRLVVSPNLWAGVGLVRGGAGTALVGTPEQVTERIREYQAIGIDTIIGSGYPHLEEAYRVAELLFPRLGLGTRRQQAHRDIANEFSVGFHGAARLQASS.

The protein belongs to the SsuD family.

It catalyses the reaction an alkanesulfonate + FMNH2 + O2 = an aldehyde + FMN + sulfite + H2O + 2 H(+). Functionally, catalyzes the desulfonation of aliphatic sulfonates. The polypeptide is Alkanesulfonate monooxygenase 2 (ssuD2) (Mesorhizobium japonicum (strain LMG 29417 / CECT 9101 / MAFF 303099) (Mesorhizobium loti (strain MAFF 303099))).